Here is a 218-residue protein sequence, read N- to C-terminus: Stromal cell-derived factor 2-like protein (218 aa).

A signal peptide spans 1 to 21; sequence MALGFFCLAIFLYLSLDPDSG. 3 consecutive MIR domains span residues 34-88, 96-151, and 154-208; these read GVEI…VKPV, GDAV…LIIE, and GKTW…AAEG. Asparagine 214 carries an N-linked (GlcNAc...) asparagine glycan.

As to quaternary structure, interacts with ERDJ3B.

The protein resides in the endoplasmic reticulum. Involved in the endoplasmic reticulum (ER) protein quality control and unfolded protein response. May be involved in the quality control of glycoproteins. Forms a complex in the ER with ERDJ3B and MED37A/BIP1 which is required for the proper accumulation and function of the surface-exposed leucine-rich repeat receptor kinases EFR involved in pathogen-associated molecular pattern (PAMP) triggered immunity. The protein is Stromal cell-derived factor 2-like protein (SDF2) of Arabidopsis thaliana (Mouse-ear cress).